We begin with the raw amino-acid sequence, 202 residues long: UPF0056 membrane protein PH0214 (202 aa).

Helical transmembrane passes span 5–25 (ILSS…ILLV), 47–67 (IGFI…QDIF), 76–96 (VAGG…GGMV), 104–124 (ILAL…AAIT), 135–155 (IIVS…LMMI), and 174–194 (IIGL…AGGI).

This sequence belongs to the UPF0056 (MarC) family.

It is found in the cell membrane. In Pyrococcus horikoshii (strain ATCC 700860 / DSM 12428 / JCM 9974 / NBRC 100139 / OT-3), this protein is UPF0056 membrane protein PH0214.